A 2454-amino-acid polypeptide reads, in one-letter code: Probable serine/threonine-protein kinase DDB_G0277071 (2454 aa).

Positions 31–51 (TSSLTTTTTTTTTTTTTTSTT) are enriched in low complexity. Disordered regions lie at residues 31-57 (TSSL…HESN), 206-265 (QQQL…QKQN), 340-612 (PRPP…LKIE), 963-1051 (NNIN…NENE), 1201-1330 (SSDD…SNPL), and 1342-1528 (ISKG…SNNT). A coiled-coil region spans residues 259-307 (KQQQKQNSQQQQQQQQQQQQQQQQQQQQQQQQQQQQQQQQQQQKLNIHE). Composition is skewed to low complexity over residues 346–399 (QQHQ…NITP) and 406–428 (PSSV…KPTS). A compositionally biased stretch (polar residues) spans 429 to 444 (IGQIQSLHYHNPSLYQ). 2 stretches are compositionally biased toward low complexity: residues 450–461 (NRNRGNNNNNNN) and 475–536 (SSTV…NTPN). Gly residues predominate over residues 553-568 (GGIGGGGGGGSGGGGI). 5 stretches are compositionally biased toward low complexity: residues 963–1048 (NNIN…TTTN), 1201–1248 (SSDD…TGGP), 1275–1284 (NSSNNNNTSS), 1299–1324 (SGSS…PTTG), and 1346–1403 (SPAS…SVST). Residues 1417-1441 (LNLSSVSKTGQASTSTPNLLNLKNI) are compositionally biased toward polar residues. The segment covering 1442-1478 (PTTTNNSNSTTTTTTTTPTGKPQFSLNLSSLSKSSSS) has biased composition (low complexity). The span at 1479–1491 (TETVPPSQPNQPI) shows a compositional bias: polar residues. Positions 1509–1528 (STTTTTTTTTPPPINNSNNT) are enriched in low complexity. Residues 1730-2034 (FKDLKRVAKG…TKFIAIKPTI (305 aa)) enclose the Protein kinase domain. ATP contacts are provided by residues 1736 to 1744 (VAKGAYGTV) and K1760. D1858 serves as the catalytic Proton acceptor. The Tyrosine-protein phosphatase domain occupies 2130–2271 (RPSKVASFMY…LCRWGKQRRN (142 aa)). Positions 2379–2404 (NINNNNNNNSNNSKSKQQQQQQQNQN) are disordered.

This sequence belongs to the protein kinase superfamily. Ser/Thr protein kinase family.

The catalysed reaction is L-seryl-[protein] + ATP = O-phospho-L-seryl-[protein] + ADP + H(+). The enzyme catalyses L-threonyl-[protein] + ATP = O-phospho-L-threonyl-[protein] + ADP + H(+). The sequence is that of Probable serine/threonine-protein kinase DDB_G0277071 from Dictyostelium discoideum (Social amoeba).